The sequence spans 288 residues: 4-diphosphocytidyl-2-C-methyl-D-erythritol kinase (288 aa).

Residue Lys12 is part of the active site. Pro95 to Ser105 is an ATP binding site. Asp137 is an active-site residue.

It belongs to the GHMP kinase family. IspE subfamily.

It carries out the reaction 4-CDP-2-C-methyl-D-erythritol + ATP = 4-CDP-2-C-methyl-D-erythritol 2-phosphate + ADP + H(+). It participates in isoprenoid biosynthesis; isopentenyl diphosphate biosynthesis via DXP pathway; isopentenyl diphosphate from 1-deoxy-D-xylulose 5-phosphate: step 3/6. Its function is as follows. Catalyzes the phosphorylation of the position 2 hydroxy group of 4-diphosphocytidyl-2C-methyl-D-erythritol. The polypeptide is 4-diphosphocytidyl-2-C-methyl-D-erythritol kinase (Halorhodospira halophila (strain DSM 244 / SL1) (Ectothiorhodospira halophila (strain DSM 244 / SL1))).